Consider the following 90-residue polypeptide: MLTTRRVRFYGRVQGINFRSNTLVKALELGVKGWIKNLPDGSVEALFSGESEQIEKLISYCVSNMPYAEVKRYDVYIEPYTEFQDFQIKR.

One can recognise an Acylphosphatase-like domain in the interval 4-90 (TRRVRFYGRV…TEFQDFQIKR (87 aa)). Catalysis depends on residues arginine 19 and asparagine 37.

Belongs to the acylphosphatase family.

It carries out the reaction an acyl phosphate + H2O = a carboxylate + phosphate + H(+). In Thermoplasma volcanium (strain ATCC 51530 / DSM 4299 / JCM 9571 / NBRC 15438 / GSS1), this protein is Acylphosphatase (acyP).